The sequence spans 205 residues: Ribonuclease HII (205 aa).

Residues 13–205 (TIVAGVDEVG…APVKYMLSMC (193 aa)) form the RNase H type-2 domain. A divalent metal cation is bound by residues D19, E20, and D114.

It belongs to the RNase HII family. Requires Mn(2+) as cofactor. Mg(2+) serves as cofactor.

The protein resides in the cytoplasm. The enzyme catalyses Endonucleolytic cleavage to 5'-phosphomonoester.. In terms of biological role, endonuclease that specifically degrades the RNA of RNA-DNA hybrids. This Blochmanniella floridana protein is Ribonuclease HII.